Consider the following 438-residue polypeptide: UDP-N-acetylglucosamine 1-carboxyvinyltransferase 1 (438 aa).

Residue Lys22–Asn23 participates in phosphoenolpyruvate binding. Arg95 is a UDP-N-acetyl-alpha-D-glucosamine binding site. Cys119 functions as the Proton donor in the catalytic mechanism. Cys119 bears the 2-(S-cysteinyl)pyruvic acid O-phosphothioketal mark. UDP-N-acetyl-alpha-D-glucosamine-binding positions include Arg124–Leu128, Asp307, and Val329.

It belongs to the EPSP synthase family. MurA subfamily.

The protein localises to the cytoplasm. The enzyme catalyses phosphoenolpyruvate + UDP-N-acetyl-alpha-D-glucosamine = UDP-N-acetyl-3-O-(1-carboxyvinyl)-alpha-D-glucosamine + phosphate. It participates in cell wall biogenesis; peptidoglycan biosynthesis. Cell wall formation. Adds enolpyruvyl to UDP-N-acetylglucosamine. This is UDP-N-acetylglucosamine 1-carboxyvinyltransferase 1 from Lactiplantibacillus plantarum (strain ATCC BAA-793 / NCIMB 8826 / WCFS1) (Lactobacillus plantarum).